Here is a 354-residue protein sequence, read N- to C-terminus: 3-dehydroquinate synthase (354 aa).

Residues G100 to D104, T124 to T125, K136, K145, and F163 to T166 contribute to the NAD(+) site. The Zn(2+) site is built by E178, H242, and H256.

The protein belongs to the sugar phosphate cyclases superfamily. Dehydroquinate synthase family. It depends on NAD(+) as a cofactor. The cofactor is Co(2+). Requires Zn(2+) as cofactor.

The protein localises to the cytoplasm. It catalyses the reaction 7-phospho-2-dehydro-3-deoxy-D-arabino-heptonate = 3-dehydroquinate + phosphate. The protein operates within metabolic intermediate biosynthesis; chorismate biosynthesis; chorismate from D-erythrose 4-phosphate and phosphoenolpyruvate: step 2/7. Functionally, catalyzes the conversion of 3-deoxy-D-arabino-heptulosonate 7-phosphate (DAHP) to dehydroquinate (DHQ). The polypeptide is 3-dehydroquinate synthase (Staphylococcus aureus (strain COL)).